The following is a 108-amino-acid chain: U-scoloptoxin(16)-Sm1a (108 aa).

Positions 1–19 (MNLFLVLFVFSFSVSQFFA) are cleaved as a signal peptide.

It belongs to the scoloptoxin-16 family. Contains 4 disulfide bonds. In terms of tissue distribution, expressed by the venom gland.

The protein localises to the secreted. This is U-scoloptoxin(16)-Sm1a from Scolopendra morsitans (Tanzanian blue ringleg centipede).